The sequence spans 909 residues: MTDVTVKSLAEEIQTSVDRLVQQFADAGIKKTETDFVSQKEKEALLAHLNREQGGSAGKPDKLTLQRKTRSTLNVSGTDGKSKPVAVEVRKKRTYVNRDAVEQAKAEEQAKREAEEQARREAEEKAQREAEAAAKKLVEEQAKREAEEKAKREAAEKAKRQAAESEKVTNQHTEHKQKPAQTDKTIQSEKARREAEAADLKRKAEEEMRRKVEEEAKRVAEEARRMAEENQDKWSSDSDSIDSDDYHVTTSRHARAAEDENDAKVEGDRRARGRSGKATRQKKNNKHSESKADREEARAVGRTKGKQRKTSTLQQSFNKPVAAVNRDVVIGETITVAELANKMAVKGSQVIKAMMKMGAMATINQVIDQETAQLVAEEMGHKVILRRENELEEALMSDRDTGEAVAEPRAPVVTIMGHVDHGKTSLLDYIRSTKVASGEAGGITQHIGAYHVETDSGMITFLDTPGHAAFTSMRARGAKATDIVVLVVAADDGVMPQTIEAIQHAKAASVPVVVAVNKIDKPEADPDRVKSELSQHGVQPEEWGGETQFINVSAKAGIGIDELLDAILLQAEVLELKAVRSGMASGVVIESFLDKGRGPVATVLVQEGTLNKGDIVLCGFEYGRVRAMRDELGREVFSAGPSIPVEILGLSNVPAAGDEATVVRDEKKAREVALYRQGKFREVKLARQQKSKLENMFANMEEGEVSELNIVLKSDVQGSCEAIREALEQLSTDEVKVKIIGSGVGGITETDATLAAASNAIILGFNVRADASARRVVENESLDLRYYSVIYSLIDEVKQAMSGMLAPEYKQQIMGLAEVRDVFKSPKFGAIAGCMVTEGTIKRNNPIRVLRDNVVIYEGELESLRRFKDDVNEVRNGMECGIGVKNYNDVRVGDMIEVFEIIEVKRSIA.

The disordered stretch occupies residues 49-314; it reads LNREQGGSAG…GKQRKTSTLQ (266 aa). Basic and acidic residues-rich tracts occupy residues 99-177, 186-236, and 255-270; these read DAVE…EHKQ, IQSE…KWSS, and RAAE…GDRR. The span at 271–285 shows a compositional bias: basic residues; sequence ARGRSGKATRQKKNN. Positions 286–299 are enriched in basic and acidic residues; sequence KHSESKADREEARA. The 170-residue stretch at 408–577 folds into the tr-type G domain; that stretch reads PRAPVVTIMG…LLQAEVLELK (170 aa). The G1 stretch occupies residues 417-424; that stretch reads GHVDHGKT. 417-424 provides a ligand contact to GTP; that stretch reads GHVDHGKT. The segment at 442–446 is G2; the sequence is GITQH. The tract at residues 463-466 is G3; the sequence is DTPG. GTP contacts are provided by residues 463 to 467 and 517 to 520; these read DTPGH and NKID. The G4 stretch occupies residues 517–520; it reads NKID. A G5 region spans residues 553-555; it reads SAK.

This sequence belongs to the TRAFAC class translation factor GTPase superfamily. Classic translation factor GTPase family. IF-2 subfamily.

It is found in the cytoplasm. One of the essential components for the initiation of protein synthesis. Protects formylmethionyl-tRNA from spontaneous hydrolysis and promotes its binding to the 30S ribosomal subunits. Also involved in the hydrolysis of GTP during the formation of the 70S ribosomal complex. This Photorhabdus laumondii subsp. laumondii (strain DSM 15139 / CIP 105565 / TT01) (Photorhabdus luminescens subsp. laumondii) protein is Translation initiation factor IF-2.